Here is a 307-residue protein sequence, read N- to C-terminus: Elongation factor Ts (307 aa).

Positions 79 to 82 (TDFV) are involved in Mg(2+) ion dislocation from EF-Tu.

Belongs to the EF-Ts family.

The protein localises to the cytoplasm. Functionally, associates with the EF-Tu.GDP complex and induces the exchange of GDP to GTP. It remains bound to the aminoacyl-tRNA.EF-Tu.GTP complex up to the GTP hydrolysis stage on the ribosome. This Rhizobium meliloti (strain 1021) (Ensifer meliloti) protein is Elongation factor Ts.